A 389-amino-acid polypeptide reads, in one-letter code: Succinate--CoA ligase [ADP-forming] subunit beta (389 aa).

In terms of domain architecture, ATP-grasp spans 9–244 (KELLRQFNVP…IDEEDAAEIE (236 aa)). ATP contacts are provided by residues Lys46, 53-55 (GRG), Glu99, Ala102, and Glu107. The Mg(2+) site is built by Asn199 and Asp213. Substrate contacts are provided by residues Asn264 and 321–323 (GIM).

Belongs to the succinate/malate CoA ligase beta subunit family. As to quaternary structure, heterotetramer of two alpha and two beta subunits. The cofactor is Mg(2+).

It carries out the reaction succinate + ATP + CoA = succinyl-CoA + ADP + phosphate. The enzyme catalyses GTP + succinate + CoA = succinyl-CoA + GDP + phosphate. The protein operates within carbohydrate metabolism; tricarboxylic acid cycle; succinate from succinyl-CoA (ligase route): step 1/1. In terms of biological role, succinyl-CoA synthetase functions in the citric acid cycle (TCA), coupling the hydrolysis of succinyl-CoA to the synthesis of either ATP or GTP and thus represents the only step of substrate-level phosphorylation in the TCA. The beta subunit provides nucleotide specificity of the enzyme and binds the substrate succinate, while the binding sites for coenzyme A and phosphate are found in the alpha subunit. The polypeptide is Succinate--CoA ligase [ADP-forming] subunit beta (Polynucleobacter asymbioticus (strain DSM 18221 / CIP 109841 / QLW-P1DMWA-1) (Polynucleobacter necessarius subsp. asymbioticus)).